The primary structure comprises 579 residues: Potassium-transporting ATPase potassium-binding subunit (579 aa).

10 consecutive transmembrane segments (helical) span residues 2-22 (MNLV…AIPL), 66-86 (SFSV…LHIF), 135-155 (GLTV…FALI), 177-197 (VLYI…SQGV), 260-280 (TILS…ALCF), 292-312 (GIAI…IVGV), 391-411 (VFGG…LAVF), 437-457 (VLVC…ASIL), 490-510 (FAGF…SMIF), and 546-566 (FIGL…FPAL).

This sequence belongs to the KdpA family. As to quaternary structure, the system is composed of three essential subunits: KdpA, KdpB and KdpC.

The protein localises to the cell membrane. Part of the high-affinity ATP-driven potassium transport (or Kdp) system, which catalyzes the hydrolysis of ATP coupled with the electrogenic transport of potassium into the cytoplasm. This subunit binds the extracellular potassium ions and delivers the ions to the membrane domain of KdpB through an intramembrane tunnel. The polypeptide is Potassium-transporting ATPase potassium-binding subunit (Clostridium botulinum (strain Eklund 17B / Type B)).